A 763-amino-acid polypeptide reads, in one-letter code: Photosystem I P700 chlorophyll a apoprotein A1 (763 aa).

8 consecutive transmembrane segments (helical) span residues 72–95, 158–181, 197–221, 305–323, 360–383, 399–425, 447–469, and 544–562; these read IFSAHFGHLAVIFIWLSGAYFHGA, LYVTAIGALVMAGLMLFAGWFHYH, LNHHLAGLLGLGSLSWAGHQIHVSL, TAHHHLAIAVLFIVAGHMY, WHAQLSINLAILGSISIIVAHHMY, LSLFTHHIWIGGFLIVGAGAHAAIFMV, AIISHLNWVCIWLGFHSFGLYIH, and FMVHHIHAFTIHVTALILL. Residues C586 and C595 each coordinate [4Fe-4S] cluster. A run of 2 helical transmembrane segments spans residues 602-623 and 677-699; these read HVFLGLFWMYNSLSIVIFHYSW and TSAYGLLFLGAHFVWAFSLMFLF. H688 contacts chlorophyll a'. Chlorophyll a is bound by residues M696 and Y704. W705 is a binding site for phylloquinone. A helical transmembrane segment spans residues 737-757; that stretch reads AVGVAHYLLGGIVTTWSFFLA.

This sequence belongs to the PsaA/PsaB family. The PsaA/B heterodimer binds the P700 chlorophyll special pair and subsequent electron acceptors. PSI consists of a core antenna complex that captures photons, and an electron transfer chain that converts photonic excitation into a charge separation. The cyanobacterial PSI reaction center is composed of one copy each of PsaA,B,C,D,E,F,I,J,K,L,M and X, and forms trimeric complexes. PSI electron transfer chain: 5 chlorophyll a, 1 chlorophyll a', 2 phylloquinones and 3 4Fe-4S clusters. PSI core antenna: 90 chlorophyll a, 22 carotenoids, 3 phospholipids and 1 galactolipid. P700 is a chlorophyll a/chlorophyll a' dimer, A0 is one or more chlorophyll a, A1 is one or both phylloquinones and FX is a shared 4Fe-4S iron-sulfur center. serves as cofactor.

Its subcellular location is the cellular thylakoid membrane. It carries out the reaction reduced [plastocyanin] + hnu + oxidized [2Fe-2S]-[ferredoxin] = oxidized [plastocyanin] + reduced [2Fe-2S]-[ferredoxin]. PsaA and PsaB bind P700, the primary electron donor of photosystem I (PSI), as well as the electron acceptors A0, A1 and FX. PSI is a plastocyanin/cytochrome c6-ferredoxin oxidoreductase, converting photonic excitation into a charge separation, which transfers an electron from the donor P700 chlorophyll pair to the spectroscopically characterized acceptors A0, A1, FX, FA and FB in turn. Oxidized P700 is reduced on the lumenal side of the thylakoid membrane by plastocyanin or cytochrome c6. The sequence is that of Photosystem I P700 chlorophyll a apoprotein A1 from Synechococcus elongatus (strain ATCC 33912 / PCC 7942 / FACHB-805) (Anacystis nidulans R2).